A 270-amino-acid chain; its full sequence is MNSKLVLLVVGVVFALVLVIGRQGGVVAPQSISVSPQMSTAAPVAAPIAFPQATNVAMAVEPMAAAGGTVAAMESPLPNFVPRNLKVFEGHWQGMDGRLMTEELARKLNYPRGVQGVLLGEVTLNAAFSGLLGGDVVVRIDDTPVTNMENFQAATRNVANRSEARISVIRKDNRPGTPVLRKLTVVLRAAEGGLGFAQLEGAPMILPGDPRPHGYRGACTDCHPVGQGFELSPDPDLISLPPSAITRDAVTRGVSPHEVRGPCEACHVIN.

Over 1-6 (MNSKLV) the chain is Cytoplasmic. A membrane pass occupies residues 7–20 (LLVVGVVFALVLVI). Residues 21–270 (GRQGGVVAPQ…GPCEACHVIN (250 aa)) lie on the Lumenal side of the membrane. Positions 84-201 (NLKVFEGHWQ…GGLGFAQLEG (118 aa)) are PDZ. Residues 205 to 225 (ILPGDPRPHGYRGACTDCHPV) carry the MCR (magnetochrome) 1 motif. Residues Cys-219, Cys-222, His-223, Cys-263, Cys-266, and His-267 each contribute to the heme site. Residues 245–269 (ITRDAVTRGVSPHEVRGPCEACHVI) carry the MCR 2 motif.

Belongs to the magnetosome MamP family. Homodimer. It depends on heme as a cofactor. Subject to proteolytic cleavage which requires both MamE and MamO.

Its subcellular location is the cell inner membrane. Involved in redox-control of magnetite formation. Oxidizes Fe(2+) at alkaline pH; successively forms ferrihydrite (Fe(3+)(2)O(3) 0.5 H(2)O) then magnetite (Fe(3)O(4)) from an Fe(2+) solution. The polypeptide is Multi-heme protein MamP (Magnetospirillum gryphiswaldense (strain DSM 6361 / JCM 21280 / NBRC 15271 / MSR-1)).